The sequence spans 501 residues: Cytochrome P450 90A3 (501 aa).

The chain crosses the membrane as a helical span at residues 2–22; that stretch reads AAAALLLLAAAAAIVVVAMVL. Position 446 (Cys446) interacts with heme.

It belongs to the cytochrome P450 family. Heme is required as a cofactor. In terms of tissue distribution, highly expressed in shoot apex and inflorenscence. Expressed in roots, stems, leaf blades and leaf sheaths.

It is found in the membrane. Its pathway is plant hormone biosynthesis; brassinosteroid biosynthesis. Functionally, catalyzes the C23-alpha-hydroxylation step in brassinosteroid biosynthesis. Converts 6-deoxocathasterone (6-deoxoCT) to 6-deoxoteasterone (6-deoxoTE) in the late C6-oxidation pathway and cathasterone (CT) to teasterone (TE) in the early C6-oxidation pathway of brassinolide (BL) biosynthesis. This chain is Cytochrome P450 90A3, found in Oryza sativa subsp. japonica (Rice).